Consider the following 198-residue polypeptide: Molybdenum cofactor guanylyltransferase (198 aa).

GTP contacts are provided by residues 14–16 (LAG), K27, D73, and D103. Mg(2+) is bound at residue D103.

Belongs to the MobA family. In terms of assembly, monomer. Mg(2+) serves as cofactor.

Its subcellular location is the cytoplasm. The catalysed reaction is Mo-molybdopterin + GTP + H(+) = Mo-molybdopterin guanine dinucleotide + diphosphate. Transfers a GMP moiety from GTP to Mo-molybdopterin (Mo-MPT) cofactor (Moco or molybdenum cofactor) to form Mo-molybdopterin guanine dinucleotide (Mo-MGD) cofactor. In Pseudomonas paraeruginosa (strain DSM 24068 / PA7) (Pseudomonas aeruginosa (strain PA7)), this protein is Molybdenum cofactor guanylyltransferase.